The sequence spans 496 residues: Probable cytosol aminopeptidase (496 aa).

2 residues coordinate Mn(2+): lysine 261 and aspartate 266. Lysine 273 is a catalytic residue. Residues aspartate 284, aspartate 343, and glutamate 345 each contribute to the Mn(2+) site. Residue arginine 347 is part of the active site.

This sequence belongs to the peptidase M17 family. The cofactor is Mn(2+).

It localises to the cytoplasm. The enzyme catalyses Release of an N-terminal amino acid, Xaa-|-Yaa-, in which Xaa is preferably Leu, but may be other amino acids including Pro although not Arg or Lys, and Yaa may be Pro. Amino acid amides and methyl esters are also readily hydrolyzed, but rates on arylamides are exceedingly low.. It catalyses the reaction Release of an N-terminal amino acid, preferentially leucine, but not glutamic or aspartic acids.. In terms of biological role, presumably involved in the processing and regular turnover of intracellular proteins. Catalyzes the removal of unsubstituted N-terminal amino acids from various peptides. This chain is Probable cytosol aminopeptidase, found in Bacillus licheniformis (strain ATCC 14580 / DSM 13 / JCM 2505 / CCUG 7422 / NBRC 12200 / NCIMB 9375 / NCTC 10341 / NRRL NRS-1264 / Gibson 46).